The following is a 172-amino-acid chain: S-ribosylhomocysteine lyase (172 aa).

Fe cation-binding residues include His-54, His-58, and Cys-128.

Belongs to the LuxS family. In terms of assembly, homodimer. It depends on Fe cation as a cofactor.

The enzyme catalyses S-(5-deoxy-D-ribos-5-yl)-L-homocysteine = (S)-4,5-dihydroxypentane-2,3-dione + L-homocysteine. Involved in the synthesis of autoinducer 2 (AI-2) which is secreted by bacteria and is used to communicate both the cell density and the metabolic potential of the environment. The regulation of gene expression in response to changes in cell density is called quorum sensing. Catalyzes the transformation of S-ribosylhomocysteine (RHC) to homocysteine (HC) and 4,5-dihydroxy-2,3-pentadione (DPD). This chain is S-ribosylhomocysteine lyase, found in Vibrio vulnificus (strain CMCP6).